The chain runs to 359 residues: F-box protein At1g10895 (359 aa).

The 47-residue stretch at 2 to 48 (TTMSDLDEIMVAEILCRTPMTCLKTVRSVCKKWNALSKKWFFFGKAK) folds into the F-box domain.

The protein is F-box protein At1g10895 of Arabidopsis thaliana (Mouse-ear cress).